The primary structure comprises 1844 residues: MAFQLALDALAPTTHRDPSLHPILESTVDSIRSSIQTYPWSIPKELLPLLNSYGIPTSGLGTSHHPHAAHKTIETFLLCTHWSFQATTPSSVMFMKPSKFNKLAQVNSNFRELKNYRLHPNDSTRYPFTSPDLPVFPTIFMHDALMYYHPSQIMDLFLRKPNLERLYASLVVPPEAHLSDQSFYPKLYTYTTTRHTLHYVPEGHEAGSYNQPSDAHSWLRINSIRLGNHHLSVTILESWGPVHSLLIQRGTPPPDPSLQAPPTLMASDLFRSYQEPRLDVVSFRIPDAIELPQATFLQQPLRDRLVPRAVYNALFTYTRAVRTLRTSDPAAFVRMHSSKPDHDWVTSNAWDNLQTFALLNVPLRPNVVYHVLQSPIASLSLYLRQHWRRLTATAVPILSFLTLLQRFLPLPIPLAEVKSITAFRRELYRKKEPHHPLDVFHLQHRIRNYHSAISAVRPASPPHQKLPHALQKAALLLLRPISPLLTATPFFRSEQKSMLPNAELSWTLKRFALPWQASLVLLALSESSILLHKLFSPPTLQAQHDTYHRHLHPGSYSLQWERTPLSIPRTTAFLPFTPTTSTAPPDRSEASLPPAFASTFVPRPPPAASSPGAQPPTTTAAPPTPIEPTQRAHQNSDLALESSTSTEPPPPPIRSPDMTPSAPVLFPEINSPRRFPPQLPATPDLEPAHTPPPLSIPHQDPTDSVDPLMGSHLLHHSLPAPPTHPLPSSQLLPAPLTNDPTAIGPVLPFEELHPRRYPENTATFLTRLRSLPSNHLPQPTLNCLLSAVSDQTKVSEEHLWESLQTILPDSQLSNEETNTLGLSTEHLTALAHLYNFQATVYSDRGPILFGPSDTIKRIDITHTTGPPSHFSPGKRLLGSQPSAKGHPSDPLIRAMKSFKVSGNYLPFSEAHNHPTSISHAKNLISNMKNGFDGVLSLLDVSTGQRTGPTPKERIIQIDHYLDTNPGKTTPVVHFAGFAGCGKTYPIQQLLKTKLFKDFRVSCPTTELRTEWKTAMELHGSQSWRFNTWESSILKSSRILVIDEIYKMPRGYLDLSILADPALELVIILGDPLQGEYHSQSKDSSNHRLPSETLRLLPYIDMYCWWSYRIPQCIARLFQIHSFNAWQGVIGSVSTPHDQSPVLTNSHASSLTFNSLGYRSCTISSSQGLTFCDPAIIVLDNYTKWLSSANGLVALTRSRSGVQFMGPSSYVGGTNGSSAMFSDAFNNSLIIMDRYFPSLFPQLKLITSPLTTRGPKLNGATPSASPTHRSPNFHLPPHIPLSYDRDFVTVNSTLPDQGPETRLDTHFLPPSRLPLHFDLPPAITPPPVSTSVDPPQAKASPVYPGEFFDSLAAFFLPAHDPSTREILHKDQSSNQFPWFDRPFSLSCQPSSLISAKHAPNHDPTLLPASINKRLRFRPSDSPHQITADDVVLGLQLFHSLCRAYSRQPNSTVPFNPELFAECISLNEYAQLSSKTQSTIVANASRSDPDWRHTTVKIFAKAQHKVNDGSIFGSWKACQTLALMHDYVILVLGPVKKYQRIFDNADRPPNIYSHCGKTPNQLRDWCQEHLTHSTPKIANDYTAFDQSQHGESVVLEALKMKRLNIPSHLIQLHVHLKTNVSTQFGPLTCMRLTGEPGTYDDNTDYNLAVIYSQYDVGSCPIMVSGDDSLIDHPLPTRHDWPSVLKRLHLRFKLELTSHPLFCGYYVGPAGCIRNPLALFCKLMIAVDDDALDDRRLSYLTEFTTGHLLGESLWHLLPETHVQYQSACFDFFCRRCPRHEKMLLDDSTPALSLLERITSSPRWLTKNAMYLLPAKLRLAITSLSQTQSFPESIEVSHAESELLHYVQ.

In terms of domain architecture, Alphavirus-like MT spans 58–219; the sequence is SGLGTSHHPH…NQPSDAHSWL (162 aa). A disordered region spans residues 571-729; that stretch reads TAFLPFTPTT…APPTHPLPSS (159 aa). A compositionally biased stretch (low complexity) spans 609 to 621; the sequence is SSPGAQPPTTTAA. The OTU domain occupies 728 to 879; it reads SSQLLPAPLT…FSPGKRLLGS (152 aa). Positions 730-884 constitute a Peptidase C21 domain; that stretch reads QLLPAPLTND…RLLGSQPSAK (155 aa). Cys783 (for protease activity) is an active-site residue. The tract at residues 859 to 887 is disordered; that stretch reads DITHTTGPPSHFSPGKRLLGSQPSAKGHP. A GPP flap motif is present at residues 865–867; it reads GPP. His869 functions as the For protease activity in the catalytic mechanism. The region spanning 946–1103 is the (+)RNA virus helicase ATP-binding domain; the sequence is TGPTPKERII…RLLPYIDMYC (158 aa). 976 to 983 contacts a ribonucleoside 5'-triphosphate; the sequence is GFAGCGKT. The 133-residue stretch at 1104 to 1236 folds into the (+)RNA virus helicase C-terminal domain; sequence WWSYRIPQCI…SLIIMDRYFP (133 aa). The RdRp catalytic domain maps to 1572–1678; the sequence is TPKIANDYTA…DHPLPTRHDW (107 aa).

It belongs to the Tymoviridae non-structural replication polyprotein family. As to quaternary structure, interacts with host ubiquitin. In terms of processing, specific enzymatic cleavages by the host yield mature proteins.

Its subcellular location is the host chloroplast envelope. The catalysed reaction is Thiol-dependent hydrolysis of ester, thioester, amide, peptide and isopeptide bonds formed by the C-terminal Gly of ubiquitin (a 76-residue protein attached to proteins as an intracellular targeting signal).. It carries out the reaction RNA(n) + a ribonucleoside 5'-triphosphate = RNA(n+1) + diphosphate. In terms of biological role, acts as a cysteine protease, methyltransferase and deubiquitinase. The cysteine protease activity cleaves the polyprotein giving rise to mature proteins. The protease has the ability to process substrates in trans. The methyltransferase domain is probably involved in viral RNA capping. The deubiquitylating activity counteracts the degradation of the viral polymerase mediated by the host ubiquitin-proteasome system. The polymerase is thus stabilized and infectivity is increased. Favors K63 poly-Ub linkage. Its function is as follows. RNA-directed RNA polymerase is responsible for the replication and transcription of the genome. This is Non-structural replication polyprotein from Brassica.